We begin with the raw amino-acid sequence, 556 residues long: MNIAEQMKDVLKEEIKAAVLKAGLADESQIPSVLLETPKEKTHGDYSTNMAMQLARIAKKAPRQIAEEIVASFDKGKASIEKMDIAGPGFINFYMNNSYLTKLIPSVLEAGEHYGETNIGQGEKIQVEFVSANPTGDLHLGHARGAAVGDALCSVLSKAGYDVSREYYINDAGNQINNLALSVEVRYFEALGLEKPMPEDGYRGEDIIAIGKKLAEDFGDRFVHEEESERQAFFREYGLKYELDKLRSDLENFRVPFDVWYSETSLYENGKIDQALEALREKGHVYEEDGATWFRSTTFGDDKDRVLIKKDGSYTYLLPDIAYHKDKLDRGFDKLINVWGADHHGYIPRMKAAIEALGYKKGTLEVEIIQLVHLYKNGEKMKMSKRTGKAVTMRDLIEEVGLDAVRYFFAMRSADTHMDFDLDLAVSTSNENPVYYAQYAHARICSMLRQGEEQGLKPAADLDFSHIQSEKEYDLLKTIGGFPEAVAEAAEKRIPHRVTNYIYDLASALHSFYNAEKVIDPENKEKSRARLALMKATQITLNNALQLIGVSAPEKM.

The 'HIGH' region motif lies at 132–142 (ANPTGDLHLGH).

It belongs to the class-I aminoacyl-tRNA synthetase family. Monomer.

It is found in the cytoplasm. It carries out the reaction tRNA(Arg) + L-arginine + ATP = L-arginyl-tRNA(Arg) + AMP + diphosphate. The chain is Arginine--tRNA ligase from Bacillus velezensis (strain DSM 23117 / BGSC 10A6 / LMG 26770 / FZB42) (Bacillus amyloliquefaciens subsp. plantarum).